The primary structure comprises 248 residues: Biosynthetic peptidoglycan transglycosylase (248 aa).

Residues 17–37 (LLIFFFASTILAVIVYRFMPV) form a helical membrane-spanning segment.

The protein belongs to the glycosyltransferase 51 family.

The protein localises to the cell inner membrane. The enzyme catalyses [GlcNAc-(1-&gt;4)-Mur2Ac(oyl-L-Ala-gamma-D-Glu-L-Lys-D-Ala-D-Ala)](n)-di-trans,octa-cis-undecaprenyl diphosphate + beta-D-GlcNAc-(1-&gt;4)-Mur2Ac(oyl-L-Ala-gamma-D-Glu-L-Lys-D-Ala-D-Ala)-di-trans,octa-cis-undecaprenyl diphosphate = [GlcNAc-(1-&gt;4)-Mur2Ac(oyl-L-Ala-gamma-D-Glu-L-Lys-D-Ala-D-Ala)](n+1)-di-trans,octa-cis-undecaprenyl diphosphate + di-trans,octa-cis-undecaprenyl diphosphate + H(+). It participates in cell wall biogenesis; peptidoglycan biosynthesis. Functionally, peptidoglycan polymerase that catalyzes glycan chain elongation from lipid-linked precursors. This chain is Biosynthetic peptidoglycan transglycosylase, found in Bacteroides thetaiotaomicron (strain ATCC 29148 / DSM 2079 / JCM 5827 / CCUG 10774 / NCTC 10582 / VPI-5482 / E50).